Here is a 123-residue protein sequence, read N- to C-terminus: Signal recognition particle 14 kDa protein (123 aa).

The interval 99–123 is disordered; the sequence is KKKPTPTTTPSSSTTAKTAAKKTKV. Low complexity predominate over residues 103 to 116; sequence TPTTTPSSSTTAKT.

It belongs to the SRP14 family. In terms of assembly, heterodimer with srp9; binds RNA as heterodimer. Component of a signal recognition particle (SRP) complex that consists of a 7SL RNA molecule and six protein subunits: srp72, srp68, srp54, srp19, srp14 and srp9.

It localises to the cytoplasm. In terms of biological role, component of the signal recognition particle (SRP) complex, a ribonucleoprotein complex that mediates the cotranslational targeting of secretory and membrane proteins to the endoplasmic reticulum (ER). Srp9 together with srp14 and the Alu portion of the SRP RNA, constitutes the elongation arrest domain of SRP. The complex of srp9 and srp14 is required for SRP RNA binding. The polypeptide is Signal recognition particle 14 kDa protein (srp14-1) (Dictyostelium discoideum (Social amoeba)).